A 142-amino-acid polypeptide reads, in one-letter code: Small ribosomal subunit protein uS12z (142 aa).

Proline 61 is modified (hydroxyproline).

Belongs to the universal ribosomal protein uS12 family.

In Arabidopsis thaliana (Mouse-ear cress), this protein is Small ribosomal subunit protein uS12z (RPS23A).